Reading from the N-terminus, the 754-residue chain is Probable TonB-dependent siderophore receptor PirA (754 aa).

The N-terminal stretch at 1–24 is a signal peptide; the sequence is MSKRIIQSVLSVSVLASMMSMAFA. Positions 54–181 constitute a TBDR plug domain; that stretch reads EQVKQSLGVS…AGGVVNIITK (128 aa). The 569-residue stretch at 186–754 folds into the TBDR beta-barrel domain; the sequence is ETHGSVEFYT…AYYASLKYSF (569 aa). Polar residues predominate over residues 404–414; the sequence is VSTTQGKDSSG. The interval 404–424 is disordered; the sequence is VSTTQGKDSSGSGYGDQLAKG. A disulfide bond links Cys-511 and Cys-519. The TonB C-terminal box motif lies at 737–754; it reads QTYNEPGRAYYASLKYSF.

This sequence belongs to the TonB-dependent receptor family.

The protein resides in the cell outer membrane. Probably involved in the initial step of iron uptake by binding iron chelating siderophores, thereby allowing extraction of iron from the environment. May bind the siderophore, ferric enterobactin, with micromolar affinity. The polypeptide is Probable TonB-dependent siderophore receptor PirA (Acinetobacter baumannii (strain ATCC 19606 / DSM 30007 / JCM 6841 / CCUG 19606 / CIP 70.34 / NBRC 109757 / NCIMB 12457 / NCTC 12156 / 81)).